We begin with the raw amino-acid sequence, 90 residues long: Acyl-CoA-binding protein homolog (90 aa).

Positions 3–89 (LQEQFDQAAS…VESLIASLGL (87 aa)) constitute an ACB domain. An acyl-CoA is bound by residues R15, 30-34 (YALFK), K53, K57, and Y76.

This sequence belongs to the ACBP family.

Binds medium- and long-chain acyl-CoA esters with very high affinity and may function as an intracellular carrier of acyl-CoA esters. The chain is Acyl-CoA-binding protein homolog from Manduca sexta (Tobacco hawkmoth).